A 320-amino-acid polypeptide reads, in one-letter code: Putative olfactory receptor 2W5 pseudogene (320 aa).

Residue asparagine 5 is glycosylated (N-linked (GlcNAc...) asparagine). Transmembrane regions (helical) follow at residues 30–50 (VILIFCILTLVGNTAIILLLV), 58–78 (PMYFFLGNLSFLDLCFTASIA), 98–118 (VAQLYIYMMLGSTECVLLVVM), and 140–160 (LCLQLVTVAWCCGFLNSFIMC). Cysteine 97 and cysteine 179 form a disulfide bridge. A disordered region spans residues 267–320 (LPRSGEVPDSLLHHRHSQHQPPHLHFEEQGCEGDHEETSGVGERGWGASTRGTL). Positions 290–304 (LHFEEQGCEGDHEET) are enriched in basic and acidic residues.

The protein belongs to the G-protein coupled receptor 1 family.

The protein resides in the cell membrane. In terms of biological role, odorant receptor. This Homo sapiens (Human) protein is Putative olfactory receptor 2W5 pseudogene.